A 187-amino-acid chain; its full sequence is GTPase KRas (187 aa).

GTP is bound by residues 10–18, 29–35, 59–60, and 116–119; these read GAVGVGKSA, VDEYDPT, AG, and NKCA. Positions 32-40 match the Effector region motif; that stretch reads YDPTIEDSY. A disordered region spans residues 168–187; that stretch reads EKMSKDGKKKKKSKTKCSIL. A Cysteine methyl ester modification is found at Cys-184. Residue Cys-184 is the site of S-farnesyl cysteine attachment. The propeptide at 185–187 is removed in mature form; it reads SIL.

The protein belongs to the small GTPase superfamily. Ras family.

The protein resides in the cell membrane. It is found in the cytoplasm. It catalyses the reaction GTP + H2O = GDP + phosphate + H(+). With respect to regulation, alternates between an inactive form bound to GDP and an active form bound to GTP. Activated by a guanine nucleotide-exchange factor (GEF) and inactivated by a GTPase-activating protein (GAP). Functionally, ras proteins bind GDP/GTP and possess intrinsic GTPase activity. Plays an important role in the regulation of cell proliferation. This Xenopus laevis (African clawed frog) protein is GTPase KRas (kras).